Here is a 231-residue protein sequence, read N- to C-terminus: Superoxide dismutase [Mn] 1, mitochondrial (231 aa).

A mitochondrion-targeting transit peptide spans 1–29 (MAIRCVASRKTLAGLKETSSRLLRIRGIQ). Residues His-55 and His-103 each contribute to the Mn(2+) site. Ser-124 carries the post-translational modification Phosphoserine. Mn(2+) contacts are provided by Asp-192 and His-196.

It belongs to the iron/manganese superoxide dismutase family. Homotetramer. It depends on Mn(2+) as a cofactor.

The protein resides in the mitochondrion matrix. The enzyme catalyses 2 superoxide + 2 H(+) = H2O2 + O2. Its activity is regulated as follows. Activated by MTM1. Destroys superoxide anion radicals which are normally produced within the cells and which are toxic to biological systems. This chain is Superoxide dismutase [Mn] 1, mitochondrial (MSD1), found in Arabidopsis thaliana (Mouse-ear cress).